A 440-amino-acid chain; its full sequence is MNCSELLPPASVRGMRELQRAEFQKRVQVPQLRVPEQQVQRVIPLVKKFLLKMEHMHPVRAVDKSREILLHPMPIKAWESLPTEDLQKQQVTQENFSFVELELNYENWSANEILKSVLPEEEEGMTSYSRIGHIVHLNLRDHLLPYKQLIGEVLRDKLPNCRTVVNKASSIDNTYRNFQLELICGEAEYQVETKENGIPFEFDFSKVYWNPRLSTEHERIVKLLQPGDVLYDVFAGVGPFSVPAAKKRCHVLANDLNPVSFHWLQHNAKRNKCLSNIKMSNKDGREFILKELRADLLQRLRLTDTSSYATHITMNLPAMAVEFLDAFRGLYTDNELADISDAVVFPTVHVYSFAKGENTKALVRAQVEQNLASTLDEKQLQGISFVRNVAPNKDMYRVSFKLTRHLLTTSKEAEANNVRKRCAEDEKVDPEVAATKVKCV.

Residues His217, 255–256 (DL), 283–284 (DG), and Asn315 each bind S-adenosyl-L-methionine.

Belongs to the class I-like SAM-binding methyltransferase superfamily. TRM5/TYW2 family. Monomer.

The protein resides in the mitochondrion matrix. It localises to the nucleus. Its subcellular location is the cytoplasm. The enzyme catalyses guanosine(37) in tRNA + S-adenosyl-L-methionine = N(1)-methylguanosine(37) in tRNA + S-adenosyl-L-homocysteine + H(+). Its function is as follows. Specifically methylates the N1 position of guanosine-37 in various cytoplasmic and mitochondrial tRNAs. Methylation is not dependent on the nature of the nucleoside 5' of the target nucleoside. This is the first step in the biosynthesis of wybutosine (yW), a modified base adjacent to the anticodon of tRNAs and required for accurate decoding. The polypeptide is tRNA (guanine(37)-N(1))-methyltransferase (Drosophila pseudoobscura pseudoobscura (Fruit fly)).